The sequence spans 581 residues: Arginine--tRNA ligase (581 aa).

The 'HIGH' region motif lies at 126–136 (PNLAKEMHVGH).

The protein belongs to the class-I aminoacyl-tRNA synthetase family. As to quaternary structure, monomer.

The protein resides in the cytoplasm. The catalysed reaction is tRNA(Arg) + L-arginine + ATP = L-arginyl-tRNA(Arg) + AMP + diphosphate. The sequence is that of Arginine--tRNA ligase from Shewanella sp. (strain ANA-3).